Reading from the N-terminus, the 401-residue chain is Probable 2,3-bisphosphoglycerate-independent phosphoglycerate mutase (401 aa).

Belongs to the BPG-independent phosphoglycerate mutase family. A-PGAM subfamily.

The enzyme catalyses (2R)-2-phosphoglycerate = (2R)-3-phosphoglycerate. Its pathway is carbohydrate degradation; glycolysis; pyruvate from D-glyceraldehyde 3-phosphate: step 3/5. Catalyzes the interconversion of 2-phosphoglycerate and 3-phosphoglycerate. The protein is Probable 2,3-bisphosphoglycerate-independent phosphoglycerate mutase of Thermotoga petrophila (strain ATCC BAA-488 / DSM 13995 / JCM 10881 / RKU-1).